The primary structure comprises 640 residues: Threonine--tRNA ligase (640 aa).

The 61-residue stretch at 1-61 (MPTITLPDGS…ENDASLQIIT (61 aa)) folds into the TGS domain. The tract at residues 242–533 (DHRKIGKRLG…LIEHYEGAFP (292 aa)) is catalytic. Residues C333, H384, and H510 each coordinate Zn(2+).

The protein belongs to the class-II aminoacyl-tRNA synthetase family. As to quaternary structure, homodimer. Requires Zn(2+) as cofactor.

It is found in the cytoplasm. It catalyses the reaction tRNA(Thr) + L-threonine + ATP = L-threonyl-tRNA(Thr) + AMP + diphosphate + H(+). Its function is as follows. Catalyzes the attachment of threonine to tRNA(Thr) in a two-step reaction: L-threonine is first activated by ATP to form Thr-AMP and then transferred to the acceptor end of tRNA(Thr). Also edits incorrectly charged L-seryl-tRNA(Thr). The sequence is that of Threonine--tRNA ligase from Pseudomonas syringae pv. syringae (strain B728a).